The primary structure comprises 419 residues: L-rhamnose isomerase (419 aa).

Mn(2+) contacts are provided by His-262, Asp-294, and Asp-296.

This sequence belongs to the rhamnose isomerase family. In terms of assembly, homotetramer. Mn(2+) serves as cofactor.

The protein resides in the cytoplasm. It carries out the reaction L-rhamnopyranose = L-rhamnulose. Its pathway is carbohydrate degradation; L-rhamnose degradation; glycerone phosphate from L-rhamnose: step 1/3. In terms of biological role, catalyzes the interconversion of L-rhamnose and L-rhamnulose. The chain is L-rhamnose isomerase from Shigella flexneri serotype 5b (strain 8401).